Reading from the N-terminus, the 98-residue chain is MFDQSMTSEALTVTTVTAQDQITQKPLRDSVKASLKNYLGQLNGQEVNDLYELVLAEVEQPLLDMIMQHTRGNQTKAANMMGINRGTLRKKLKKYGMN.

Positions 74–93 (QTKAANMMGINRGTLRKKLK) form a DNA-binding region, H-T-H motif.

The protein belongs to the transcriptional regulatory Fis family. Homodimer.

Its function is as follows. Activates ribosomal RNA transcription. Plays a direct role in upstream activation of rRNA promoters. The sequence is that of DNA-binding protein Fis from Aliivibrio fischeri (strain ATCC 700601 / ES114) (Vibrio fischeri).